A 508-amino-acid polypeptide reads, in one-letter code: Photosystem II CP47 reaction center protein (508 aa).

The next 6 membrane-spanning stretches (helical) occupy residues 21–36, 101–115, 140–156, 203–218, 237–252, and 457–472; these read AVHIMHTALVSGWAGS, IVFSGLCFLAAIWHW, GIHLFLAGVACFGFGAF, IAAGTLGILAGLFHLS, VLSSSIAAVFFAAFVV, and TFALLFFFGHIWHGAR.

It belongs to the PsbB/PsbC family. PsbB subfamily. In terms of assembly, PSII is composed of 1 copy each of membrane proteins PsbA, PsbB, PsbC, PsbD, PsbE, PsbF, PsbH, PsbI, PsbJ, PsbK, PsbL, PsbM, PsbT, PsbX, PsbY, PsbZ, Psb30/Ycf12, at least 3 peripheral proteins of the oxygen-evolving complex and a large number of cofactors. It forms dimeric complexes. The cofactor is Binds multiple chlorophylls. PSII binds additional chlorophylls, carotenoids and specific lipids..

The protein localises to the plastid. The protein resides in the chloroplast thylakoid membrane. In terms of biological role, one of the components of the core complex of photosystem II (PSII). It binds chlorophyll and helps catalyze the primary light-induced photochemical processes of PSII. PSII is a light-driven water:plastoquinone oxidoreductase, using light energy to abstract electrons from H(2)O, generating O(2) and a proton gradient subsequently used for ATP formation. This is Photosystem II CP47 reaction center protein from Brachypodium distachyon (Purple false brome).